The primary structure comprises 632 residues: Chaperone protein HtpG (632 aa).

The a; substrate-binding stretch occupies residues 1 to 343 (MSEQTINNKE…SNDLALNVSR (343 aa)). The interval 344 to 560 (EILQDNKVTQ…DFEMGTQMAK (217 aa)) is b. The tract at residues 561 to 632 (LLEAAGQAAP…LSAMNQLLSK (72 aa)) is c.

It belongs to the heat shock protein 90 family. Homodimer.

It is found in the cytoplasm. Its function is as follows. Molecular chaperone. Has ATPase activity. This Aliivibrio salmonicida (strain LFI1238) (Vibrio salmonicida (strain LFI1238)) protein is Chaperone protein HtpG.